A 241-amino-acid polypeptide reads, in one-letter code: Protein GrpE (241 aa).

A compositionally biased stretch (basic and acidic residues) spans 28 to 49; it reads QNCQKEETQTTNKDNQKEDETF. The interval 28–78 is disordered; the sequence is QNCQKEETQTTNKDNQKEDETFKNQPNKTKQTNTKQQKHLSKESSHQQITK. Positions 50–62 are enriched in low complexity; that stretch reads KNQPNKTKQTNTK.

It belongs to the GrpE family. In terms of assembly, homodimer.

It is found in the cytoplasm. Participates actively in the response to hyperosmotic and heat shock by preventing the aggregation of stress-denatured proteins, in association with DnaK and GrpE. It is the nucleotide exchange factor for DnaK and may function as a thermosensor. Unfolded proteins bind initially to DnaJ; upon interaction with the DnaJ-bound protein, DnaK hydrolyzes its bound ATP, resulting in the formation of a stable complex. GrpE releases ADP from DnaK; ATP binding to DnaK triggers the release of the substrate protein, thus completing the reaction cycle. Several rounds of ATP-dependent interactions between DnaJ, DnaK and GrpE are required for fully efficient folding. In Aster yellows witches'-broom phytoplasma (strain AYWB), this protein is Protein GrpE.